The following is a 75-amino-acid chain: Beta-defensin 42 (75 aa).

Residues 1–21 (MNLRLSCLLFILVTSLPAGRC) form the signal peptide. Intrachain disulfides connect C33–C60, C40–C54, and C44–C61.

Belongs to the beta-defensin family. As to expression, epididymis-specific, with highest levels in the initial segment and distal caput.

The protein resides in the secreted. Functionally, has bactericidal activity. May play a role in the antimicrobial protection of sperm and urogenital tract epithelia. This is Beta-defensin 42 from Mus musculus (Mouse).